Here is an 86-residue protein sequence, read N- to C-terminus: Large ribosomal subunit protein uL23 (86 aa).

It belongs to the universal ribosomal protein uL23 family. Part of the 50S ribosomal subunit. Contacts protein L29.

Functionally, binds to 23S rRNA. One of the proteins that surrounds the polypeptide exit tunnel on the outside of the ribosome. This Methanococcus maripaludis (strain C6 / ATCC BAA-1332) protein is Large ribosomal subunit protein uL23.